The following is a 224-amino-acid chain: 7-cyano-7-deazaguanine synthase (224 aa).

10–20 (LSGGLDSATVV) is a binding site for ATP. Positions 189, 199, 202, and 205 each coordinate Zn(2+).

Belongs to the QueC family. The cofactor is Zn(2+).

The catalysed reaction is 7-carboxy-7-deazaguanine + NH4(+) + ATP = 7-cyano-7-deazaguanine + ADP + phosphate + H2O + H(+). The protein operates within purine metabolism; 7-cyano-7-deazaguanine biosynthesis. Catalyzes the ATP-dependent conversion of 7-carboxy-7-deazaguanine (CDG) to 7-cyano-7-deazaguanine (preQ(0)). This chain is 7-cyano-7-deazaguanine synthase, found in Pseudomonas fluorescens (strain SBW25).